The sequence spans 101 residues: MEIKILSERYNPLLKRKEYRFIVDHDGPTPTFKDVKLKLAAILNANKDLLIVEKIVEEAGMQRARGYAKLYDNEEMLKLVEREHILRKNKIEEETAAEEGE.

Belongs to the eukaryotic ribosomal protein eS24 family.

The protein is Small ribosomal subunit protein eS24 of Methanocaldococcus jannaschii (strain ATCC 43067 / DSM 2661 / JAL-1 / JCM 10045 / NBRC 100440) (Methanococcus jannaschii).